The primary structure comprises 641 residues: 1-deoxy-D-xylulose-5-phosphate synthase (641 aa).

Thiamine diphosphate is bound by residues His79 and 120 to 122; that span reads GHS. Position 151 (Asp151) interacts with Mg(2+). Residues 152-153, Asn180, Tyr290, and Glu372 each bind thiamine diphosphate; that span reads GS. Asn180 is a binding site for Mg(2+).

It belongs to the transketolase family. DXPS subfamily. In terms of assembly, homodimer. Mg(2+) is required as a cofactor. Thiamine diphosphate serves as cofactor.

The enzyme catalyses D-glyceraldehyde 3-phosphate + pyruvate + H(+) = 1-deoxy-D-xylulose 5-phosphate + CO2. Its pathway is metabolic intermediate biosynthesis; 1-deoxy-D-xylulose 5-phosphate biosynthesis; 1-deoxy-D-xylulose 5-phosphate from D-glyceraldehyde 3-phosphate and pyruvate: step 1/1. In terms of biological role, catalyzes the acyloin condensation reaction between C atoms 2 and 3 of pyruvate and glyceraldehyde 3-phosphate to yield 1-deoxy-D-xylulose-5-phosphate (DXP). The chain is 1-deoxy-D-xylulose-5-phosphate synthase from Rhodopseudomonas palustris (strain TIE-1).